The primary structure comprises 357 residues: DNA replication and repair protein RecF (357 aa).

30–37 (GANGSGKT) serves as a coordination point for ATP.

Belongs to the RecF family.

It localises to the cytoplasm. The RecF protein is involved in DNA metabolism; it is required for DNA replication and normal SOS inducibility. RecF binds preferentially to single-stranded, linear DNA. It also seems to bind ATP. This chain is DNA replication and repair protein RecF, found in Klebsiella pneumoniae subsp. pneumoniae (strain ATCC 700721 / MGH 78578).